A 523-amino-acid polypeptide reads, in one-letter code: Probable malate:quinone oxidoreductase 1 (523 aa).

It belongs to the MQO family. It depends on FAD as a cofactor.

It catalyses the reaction (S)-malate + a quinone = a quinol + oxaloacetate. The protein operates within carbohydrate metabolism; tricarboxylic acid cycle; oxaloacetate from (S)-malate (quinone route): step 1/1. The sequence is that of Probable malate:quinone oxidoreductase 1 from Pseudomonas aeruginosa (strain ATCC 15692 / DSM 22644 / CIP 104116 / JCM 14847 / LMG 12228 / 1C / PRS 101 / PAO1).